A 134-amino-acid polypeptide reads, in one-letter code: uncharacterized protein (134 aa).

The protein localises to the cell membrane. Functionally, may have a role in the regulation of NDH-1 biosynthesis. This is an uncharacterized protein from Paracoccus denitrificans.